The following is a 298-amino-acid chain: Ribosomal protein L11 methyltransferase (298 aa).

Residues threonine 139, glycine 163, aspartate 185, and asparagine 232 each contribute to the S-adenosyl-L-methionine site.

It belongs to the methyltransferase superfamily. PrmA family.

It localises to the cytoplasm. It carries out the reaction L-lysyl-[protein] + 3 S-adenosyl-L-methionine = N(6),N(6),N(6)-trimethyl-L-lysyl-[protein] + 3 S-adenosyl-L-homocysteine + 3 H(+). Methylates ribosomal protein L11. In Microcystis aeruginosa (strain NIES-843 / IAM M-2473), this protein is Ribosomal protein L11 methyltransferase.